The primary structure comprises 117 residues: Large ribosomal subunit protein bL20 (117 aa).

This sequence belongs to the bacterial ribosomal protein bL20 family.

Functionally, binds directly to 23S ribosomal RNA and is necessary for the in vitro assembly process of the 50S ribosomal subunit. It is not involved in the protein synthesizing functions of that subunit. The chain is Large ribosomal subunit protein bL20 from Rickettsia massiliae (strain Mtu5).